The primary structure comprises 476 residues: Aspartyl/glutamyl-tRNA(Asn/Gln) amidotransferase subunit B (476 aa).

It belongs to the GatB/GatE family. GatB subfamily. Heterotrimer of A, B and C subunits.

It catalyses the reaction L-glutamyl-tRNA(Gln) + L-glutamine + ATP + H2O = L-glutaminyl-tRNA(Gln) + L-glutamate + ADP + phosphate + H(+). The enzyme catalyses L-aspartyl-tRNA(Asn) + L-glutamine + ATP + H2O = L-asparaginyl-tRNA(Asn) + L-glutamate + ADP + phosphate + 2 H(+). Allows the formation of correctly charged Asn-tRNA(Asn) or Gln-tRNA(Gln) through the transamidation of misacylated Asp-tRNA(Asn) or Glu-tRNA(Gln) in organisms which lack either or both of asparaginyl-tRNA or glutaminyl-tRNA synthetases. The reaction takes place in the presence of glutamine and ATP through an activated phospho-Asp-tRNA(Asn) or phospho-Glu-tRNA(Gln). This Bacillus licheniformis (strain ATCC 14580 / DSM 13 / JCM 2505 / CCUG 7422 / NBRC 12200 / NCIMB 9375 / NCTC 10341 / NRRL NRS-1264 / Gibson 46) protein is Aspartyl/glutamyl-tRNA(Asn/Gln) amidotransferase subunit B.